We begin with the raw amino-acid sequence, 343 residues long: Probable siderophore transport system permease protein YfhA (343 aa).

Transmembrane regions (helical) follow at residues 15-35, 69-89, 97-117, 130-150, 160-180, 204-224, 249-269, 289-309, and 317-337; these read WIVF…SAGL, ILTA…LQGL, PDII…MMFF, WLPA…YLLA, LVLI…LLMI, QHVK…FVAL, FFLL…AGTI, GALL…ADIV, and VEVP…IYLL.

It belongs to the binding-protein-dependent transport system permease family. FecCD subfamily. As to quaternary structure, the complex is composed of one ATP-binding protein (YusV), two transmembrane proteins (YfiZ and YfhA) and a solute-binding protein (YfiY).

It is found in the cell membrane. Part of the ABC transporter complex YfiYZ/YfhA/YusV involved in import of the iron-hydroxamate siderophores schizokinen, arthrobactin and corprogen. The polypeptide is Probable siderophore transport system permease protein YfhA (yfhA) (Bacillus subtilis (strain 168)).